The sequence spans 299 residues: Ethylmalonyl-CoA decarboxylase (299 aa).

Belongs to the enoyl-CoA hydratase/isomerase family.

The protein resides in the cytoplasm. It is found in the cytosol. It catalyses the reaction (2S)-ethylmalonyl-CoA + H(+) = butanoyl-CoA + CO2. The catalysed reaction is (S)-methylmalonyl-CoA + H(+) = propanoyl-CoA + CO2. The enzyme catalyses (2R)-ethylmalonyl-CoA + H(+) = butanoyl-CoA + CO2. Decarboxylates ethylmalonyl-CoA, a potentially toxic metabolite, to form butyryl-CoA, suggesting it might be involved in metabolite proofreading. Acts preferentially on (S)-ethylmalonyl-CoA but also has some activity on the (R)-isomer. Also has methylmalonyl-CoA decarboxylase activity at lower level. The sequence is that of Ethylmalonyl-CoA decarboxylase (echdc1) from Xenopus laevis (African clawed frog).